Consider the following 470-residue polypeptide: Sulfate adenylyltransferase subunit 1 (470 aa).

One can recognise a tr-type G domain in the interval 22–237; that stretch reads KEVLRFITCG…LEEVPVKSEE (216 aa). Residues 31–38 form a G1 region; sequence GSVDDGKS. 31–38 contributes to the GTP binding site; sequence GSVDDGKS. Residues 89-93 are G2; that stretch reads GITID. The tract at residues 110–113 is G3; that stretch reads DTPG. Residues 110 to 114 and 165 to 168 contribute to the GTP site; these read DTPGH and NKMD. Positions 165 to 168 are G4; the sequence is NKMD. Residues 202-204 form a G5 region; the sequence is SAK.

The protein belongs to the TRAFAC class translation factor GTPase superfamily. Classic translation factor GTPase family. CysN/NodQ subfamily. Heterodimer composed of CysD, the smaller subunit, and CysN.

It carries out the reaction sulfate + ATP + H(+) = adenosine 5'-phosphosulfate + diphosphate. The protein operates within sulfur metabolism; hydrogen sulfide biosynthesis; sulfite from sulfate: step 1/3. Its function is as follows. With CysD forms the ATP sulfurylase (ATPS) that catalyzes the adenylation of sulfate producing adenosine 5'-phosphosulfate (APS) and diphosphate, the first enzymatic step in sulfur assimilation pathway. APS synthesis involves the formation of a high-energy phosphoric-sulfuric acid anhydride bond driven by GTP hydrolysis by CysN coupled to ATP hydrolysis by CysD. The polypeptide is Sulfate adenylyltransferase subunit 1 (Methylorubrum populi (strain ATCC BAA-705 / NCIMB 13946 / BJ001) (Methylobacterium populi)).